The primary structure comprises 410 residues: LL-diaminopimelate aminotransferase (410 aa).

Residues Tyr-15 and Gly-42 each coordinate substrate. Pyridoxal 5'-phosphate is bound by residues Tyr-72, 108–109, Tyr-132, Asn-187, Tyr-218, and 246–248; these read SK and SFS. Substrate-binding residues include Lys-109, Tyr-132, and Asn-187. Lys-249 is modified (N6-(pyridoxal phosphate)lysine). The pyridoxal 5'-phosphate site is built by Arg-257 and Asn-292. Asn-292 and Arg-388 together coordinate substrate.

This sequence belongs to the class-I pyridoxal-phosphate-dependent aminotransferase family. LL-diaminopimelate aminotransferase subfamily. As to quaternary structure, homodimer. It depends on pyridoxal 5'-phosphate as a cofactor.

The catalysed reaction is (2S,6S)-2,6-diaminopimelate + 2-oxoglutarate = (S)-2,3,4,5-tetrahydrodipicolinate + L-glutamate + H2O + H(+). The protein operates within amino-acid biosynthesis; L-lysine biosynthesis via DAP pathway; LL-2,6-diaminopimelate from (S)-tetrahydrodipicolinate (aminotransferase route): step 1/1. In terms of biological role, involved in the synthesis of meso-diaminopimelate (m-DAP or DL-DAP), required for both lysine and peptidoglycan biosynthesis. Catalyzes the direct conversion of tetrahydrodipicolinate to LL-diaminopimelate. The sequence is that of LL-diaminopimelate aminotransferase from Geobacter metallireducens (strain ATCC 53774 / DSM 7210 / GS-15).